The primary structure comprises 605 residues: Elongation factor 4 (605 aa).

Residues 11 to 193 (EKIRNFSIIA…QIVEKVPAPT (183 aa)) form the tr-type G domain. Residues 23–28 (DHGKST) and 140–143 (NKID) contribute to the GTP site.

This sequence belongs to the TRAFAC class translation factor GTPase superfamily. Classic translation factor GTPase family. LepA subfamily.

The protein resides in the cell membrane. It carries out the reaction GTP + H2O = GDP + phosphate + H(+). Required for accurate and efficient protein synthesis under certain stress conditions. May act as a fidelity factor of the translation reaction, by catalyzing a one-codon backward translocation of tRNAs on improperly translocated ribosomes. Back-translocation proceeds from a post-translocation (POST) complex to a pre-translocation (PRE) complex, thus giving elongation factor G a second chance to translocate the tRNAs correctly. Binds to ribosomes in a GTP-dependent manner. This is Elongation factor 4 from Streptococcus pyogenes serotype M4 (strain MGAS10750).